Here is a 199-residue protein sequence, read N- to C-terminus: MSNMEKHLFNLKFAAKELGRSAKKCDKEEKAEKAKIKKAIQKGNMEVARIHAENAIRQKNQAVNFLRMSARVDAVAARVQTAVTMGKVTKSMAGVVKSMDATLKTMNLEKISALMDKFEHQFETLDVQTQQMEDTMSSTTTLTTPQGQVDMLLQEMADEAGLDLNMELPQGQTGSVGTSVASAEQDELSQRLARLRDQV.

Residues 26-48 (DKEEKAEKAKIKKAIQKGNMEVA) are a coiled coil. The segment at 132-156 (MEDTMSSTTTLTTPQGQVDMLLQEM) is interaction with IST1. Residues 167-199 (ELPQGQTGSVGTSVASAEQDELSQRLARLRDQV) form a disordered region. A compositionally biased stretch (polar residues) spans 170-182 (QGQTGSVGTSVAS). The tract at residues 174–199 (GSVGTSVASAEQDELSQRLARLRDQV) is interaction with SPAST. Positions 178–199 (TSVASAEQDELSQRLARLRDQV) form a coiled coil. The tract at residues 180 to 196 (VASAEQDELSQRLARLR) is interaction with VPS4A, MITD1 and STAMBP. The tract at residues 180-199 (VASAEQDELSQRLARLRDQV) is interaction with VTA1. The tract at residues 183 to 199 (AEQDELSQRLARLRDQV) is interaction with VPS4B. The MIT-interacting motif motif lies at 186 to 196 (DELSQRLARLR).

It belongs to the SNF7 family. As to quaternary structure, probable peripherally associated component of the endosomal sorting required for transport complex III (ESCRT-III). ESCRT-III components are thought to multimerize to form a flat lattice on the perimeter membrane of the endosome. Several assembly forms of ESCRT-III may exist that interact and act sequentially. Interacts with CHMP1A. Interacts with VTA1; the interaction probably involves the open conformation of CHMP1B. Interacts with CHMP2A. Interacts with VPS4A; the interaction is direct. Interacts with VPS4B; the interaction is direct. Interacts with SPAST (via MIT domain); the interaction is direct. Interacts with IST1. Interacts with MITD1. Interacts with STAMBP.

It is found in the cytoplasm. The protein localises to the cytosol. It localises to the endosome. Its subcellular location is the late endosome membrane. Functionally, probable peripherally associated component of the endosomal sorting required for transport complex III (ESCRT-III) which is involved in multivesicular bodies (MVBs) formation and sorting of endosomal cargo proteins into MVBs. MVBs contain intraluminal vesicles (ILVs) that are generated by invagination and scission from the limiting membrane of the endosome and mostly are delivered to lysosomes enabling degradation of membrane proteins, such as stimulated growth factor receptors, lysosomal enzymes and lipids. The MVB pathway appears to require the sequential function of ESCRT-O, -I,-II and -III complexes. ESCRT-III proteins mostly dissociate from the invaginating membrane before the ILV is released. The ESCRT machinery also functions in topologically equivalent membrane fission events, such as the terminal stages of cytokinesis and the budding of enveloped viruses (lentiviruses). ESCRT-III proteins are believed to mediate the necessary vesicle extrusion and/or membrane fission activities, possibly in conjunction with the AAA ATPase VPS4. Involved in cytokinesis. Involved in recruiting VPS4A and/or VPS4B and SPAST to the midbody of dividing cells. This Bos taurus (Bovine) protein is Charged multivesicular body protein 1b (CHMP1B).